We begin with the raw amino-acid sequence, 732 residues long: Wall-associated receptor kinase 2 (732 aa).

The signal sequence occupies residues 1-23 (MKVQEGLFVVAVFYLAYTQLVKG). Residues 24–329 (QPRKECQTRC…RKVRPEYFRW (306 aa)) lie on the Extracellular side of the membrane. 6 N-linked (GlcNAc...) asparagine glycosylation sites follow: asparagine 57, asparagine 75, asparagine 111, asparagine 154, asparagine 217, and asparagine 246. The EGF-like 1 domain occupies 230–277 (GDKTCKQVEYRGVCGGNSTCFDSTGGTGYNCKCLEGFEGNPYLPNGCQ). Disulfide bonds link cysteine 234/cysteine 249, cysteine 243/cysteine 260, cysteine 262/cysteine 276, cysteine 282/cysteine 295, cysteine 289/cysteine 304, and cysteine 306/cysteine 318. Residues 278 to 319 (DINECISSRHNCSEHSTCENTKGSFNCNCPSGYRKDSLNSCT) form the EGF-like 2; calcium-binding domain. Asparagine 288 carries an N-linked (GlcNAc...) asparagine glycan. Residues 330 to 350 (TQIFLGTTIGFSVIMLGISCL) form a helical membrane-spanning segment. The Cytoplasmic segment spans residues 351 to 732 (QQKIKHRKNT…VTTLDIEAGR (382 aa)). Residue threonine 393 is modified to Phosphothreonine. A Protein kinase domain is found at 404 to 677 (YHESRILGQG…KEVAAELEAL (274 aa)). ATP-binding positions include 410–418 (LGQGGQGTV) and lysine 432. The residue at position 477 (tyrosine 477) is a Phosphotyrosine. The active-site Proton acceptor is aspartate 529. A phosphothreonine mark is found at threonine 563 and threonine 568. The residue at position 576 (tyrosine 576) is a Phosphotyrosine.

It belongs to the protein kinase superfamily. Ser/Thr protein kinase family. Predominantly expressed in green tissues such as stems and leaves. Detected at organ junctions.

Its subcellular location is the membrane. The enzyme catalyses L-seryl-[protein] + ATP = O-phospho-L-seryl-[protein] + ADP + H(+). It catalyses the reaction L-threonyl-[protein] + ATP = O-phospho-L-threonyl-[protein] + ADP + H(+). In terms of biological role, serine/threonine-protein kinase that may function as a signaling receptor of extracellular matrix component. Binding to pectin may have significance in the control of cell expansion, morphogenesis and development. This is Wall-associated receptor kinase 2 (WAK2) from Arabidopsis thaliana (Mouse-ear cress).